Reading from the N-terminus, the 119-residue chain is Large ribosomal subunit protein bL12 (119 aa).

Belongs to the bacterial ribosomal protein bL12 family. As to quaternary structure, homodimer. Part of the ribosomal stalk of the 50S ribosomal subunit. Forms a multimeric L10(L12)X complex, where L10 forms an elongated spine to which 2 to 4 L12 dimers bind in a sequential fashion. Binds GTP-bound translation factors.

Its function is as follows. Forms part of the ribosomal stalk which helps the ribosome interact with GTP-bound translation factors. Is thus essential for accurate translation. This chain is Large ribosomal subunit protein bL12, found in Bacillus anthracis (strain A0248).